The primary structure comprises 40 residues: Mastoparan-like peptide 12c (40 aa).

Residues Met1–Ala7 form the signal peptide. The segment at Met1 to Asp22 is disordered. AXPX repeat units follow at residues Ala7 to Lys10, Ala11 to Leu14, Ala15 to Asn18, and Pro19 to Asp22. A propeptide spanning residues Asp8–Ala25 is cleaved from the precursor. Leu39 carries the leucine amide modification.

The protein belongs to the MCD family. Mastoparan subfamily. As to expression, expressed by the venom gland.

It is found in the secreted. Shows mast cell degranulation and antimicrobial activities against the Gram-negative bacteria E.coli ATCC 25922 (MIC=6.0 ug/ml), the Gram-positive bacteria S.aureus ATCC 2592 (MIC=3.0 ug/ml) and the fungus C.albicans ATCC 2002 (MIC=12 ug/ml). Exhibits little hemolytic activity against washed human erythrocytes. Its mast cell degranulation activity may be related to the activation of G-protein coupled receptors in mast cells as well as interaction with other proteins located in cell endosomal membranes in the mast cells. The sequence is that of Mastoparan-like peptide 12c from Vespa magnifica (Hornet).